The following is a 380-amino-acid chain: MDINTDKYKNITRNLEREMINLNPIQRGGILPTESKKIIYEYWDGYSVCDYCSGRLDQIETPPINEFLEDMSKFLGMDITRPTHGARESKYAVMNSICKEGDYVVLDGNAHYTSYVALERAKLNYEKTDIEEYPTFRVIPESYAEKIDMLEDSKKNIGLILLTHVDGNYGNVADVEKVGKIAKSKGYPFLLNCAYSAGRMPIDGKKLNVDFIAASGHKSMAASGPCGLLSINKKYENEVLETSKVNVLKELQMLGCTSRGIPILSLMASFEHLIERVKKWDLELEKTRKVVNELEPLGFKQIGEKPRNHDIIRFETPILDEIAEKDKRRGFFFYEELKKRGIGGIRRGVTKEFKMSVYGLTNTQVDYVINSMKSIINELR.

Residues 86–87 (AR), Asn-192, and 215–217 (SGH) each bind pyridoxal 5'-phosphate. Lys-218 carries the post-translational modification N6-(pyridoxal phosphate)lysine.

It belongs to the SepCysS family. As to quaternary structure, homodimer. Interacts with SepRS. Requires pyridoxal 5'-phosphate as cofactor.

It carries out the reaction O-phospho-L-seryl-tRNA(Cys) + hydrogen sulfide + H(+) = L-cysteinyl-tRNA(Cys) + phosphate. Its function is as follows. Converts O-phospho-L-seryl-tRNA(Cys) (Sep-tRNA(Cys)) to L-cysteinyl-tRNA(Cys) (Cys-tRNA(Cys)). The protein is O-phospho-L-seryl-tRNA:Cys-tRNA synthase of Methanococcus maripaludis (strain DSM 14266 / JCM 13030 / NBRC 101832 / S2 / LL).